The following is a 408-amino-acid chain: CinA-like protein (408 aa).

It belongs to the CinA family.

This Anaeromyxobacter dehalogenans (strain 2CP-C) protein is CinA-like protein.